A 220-amino-acid polypeptide reads, in one-letter code: Fructose-6-phosphate aldolase (220 aa).

Lys-85 (schiff-base intermediate with substrate) is an active-site residue.

This sequence belongs to the transaldolase family. Type 3A subfamily. As to quaternary structure, homodecamer.

The protein localises to the cytoplasm. The catalysed reaction is beta-D-fructose 6-phosphate = dihydroxyacetone + D-glyceraldehyde 3-phosphate. In terms of biological role, catalyzes the reversible formation of fructose 6-phosphate from dihydroxyacetone and D-glyceraldehyde 3-phosphate via an aldolization reaction. This Salmonella heidelberg (strain SL476) protein is Fructose-6-phosphate aldolase.